The primary structure comprises 284 residues: Deoxyribonuclease-1 (284 aa).

Residues 1 to 22 (MRAARLMGALLALAGLLQLALS) form the signal peptide. Asn-40 is a glycosylation site (N-linked (GlcNAc...) asparagine). Residue Glu-100 is part of the active site. Cysteines 123 and 126 form a disulfide. The N-linked (GlcNAc...) asparagine glycan is linked to Asn-128. His-156 is a catalytic residue. A disulfide bond links Cys-195 and Cys-231.

This sequence belongs to the DNase I family. Ca(2+) serves as cofactor. The cofactor is Mg(2+).

The protein resides in the secreted. It localises to the zymogen granule. Its subcellular location is the nucleus envelope. It carries out the reaction Endonucleolytic cleavage to 5'-phosphodinucleotide and 5'-phosphooligonucleotide end-products.. Functionally, serum endocuclease secreted into body fluids by a wide variety of exocrine and endocrine organs. Expressed by non-hematopoietic tissues and preferentially cleaves protein-free DNA. Among other functions, seems to be involved in cell death by apoptosis. Binds specifically to G-actin and blocks actin polymerization. Together with DNASE1L3, plays a key role in degrading neutrophil extracellular traps (NETs). NETs are mainly composed of DNA fibers and are released by neutrophils to bind pathogens during inflammation. Degradation of intravascular NETs by DNASE1 and DNASE1L3 is required to prevent formation of clots that obstruct blood vessels and cause organ damage following inflammation. The protein is Deoxyribonuclease-1 (DNASE1) of Sus scrofa (Pig).